Reading from the N-terminus, the 58-residue chain is ATP synthase F(0) complex subunit k, mitochondrial (58 aa).

Lys16 and Lys17 each carry N6-acetyllysine; partial. Residues 23–45 traverse the membrane as a helical segment; sequence TLTGRMNCVLATYGSIALIVLYF.

In terms of assembly, component of the ATP synthase complex composed at least of ATP5F1A/subunit alpha, ATP5F1B/subunit beta, ATP5MC1/subunit c (homooctomer), MT-ATP6/subunit a, MT-ATP8/subunit 8, ATP5ME/subunit e, ATP5MF/subunit f, ATP5MG/subunit g, ATP5MK/subunit k, ATP5MJ/subunit j, ATP5F1C/subunit gamma, ATP5F1D/subunit delta, ATP5F1E/subunit epsilon, ATP5PF/subunit F6, ATP5PB/subunit b, ATP5PD/subunit d, ATP5PO/subunit OSCP. ATP synthase complex consists of a soluble F(1) head domain (subunits alpha(3) and beta(3)) - the catalytic core - and a membrane F(0) domain - the membrane proton channel (subunits c, a, 8, e, f, g, k and j). These two domains are linked by a central stalk (subunits gamma, delta, and epsilon) rotating inside the F1 region and a stationary peripheral stalk (subunits F6, b, d, and OSCP). The ATP synthase complex/complex V exists as a monomeric and a dimeric supercomplex that helps shape mitochondrial cristae to optimize proton flow.

The protein resides in the mitochondrion membrane. In terms of biological role, subunit k, of the mitochondrial membrane ATP synthase complex (F(1)F(0) ATP synthase or Complex V) that produces ATP from ADP in the presence of a proton gradient across the membrane which is generated by electron transport complexes of the respiratory chain. ATP synthase complex consist of a soluble F(1) head domain - the catalytic core - and a membrane F(1) domain - the membrane proton channel. These two domains are linked by a central stalk rotating inside the F(1) region and a stationary peripheral stalk. During catalysis, ATP synthesis in the catalytic domain of F(1) is coupled via a rotary mechanism of the central stalk subunits to proton translocation. In vivo, can only synthesize ATP although its ATP hydrolase activity can be activated artificially in vitro. Part of the complex F(0) domain. Required for dimerization of the ATP synthase complex and as such regulates ATP synthesis in the mitochondria. This Bos taurus (Bovine) protein is ATP synthase F(0) complex subunit k, mitochondrial.